A 20-amino-acid polypeptide reads, in one-letter code: DnaJ homolog subfamily C member 1 (20 aa).

At W1 to Y20 the chain is on the lumenal side. Residues N18–Y20 enclose the J domain.

As to quaternary structure, interacts (via SANT 2 domain) with SERPINA3; the interaction delays the formation of the covalent inhibitory complex SERPINA3-chymotrypsin, but does not alter the catalytic activity of SERPINA3. Interacts (via SANT 2 domain) with ITIH4 (via C-terminus); the interaction protects ITIH4 against in vitro cleavage by kallikrein. Interacts (via J domain) with HSPA5. Interacts (via cytosolic domain) with ribosomes.

It is found in the endoplasmic reticulum membrane. Its subcellular location is the nucleus membrane. The protein localises to the microsome membrane. This chain is DnaJ homolog subfamily C member 1 (DNAJC1), found in Canis lupus familiaris (Dog).